The sequence spans 422 residues: Dihydroorotase (422 aa).

Zn(2+)-binding residues include H61 and H63. Substrate is bound by residues 63–65 and N95; that span reads HLR. Residue D153 participates in Zn(2+) binding. N278 contributes to the substrate binding site. D305 provides a ligand contact to Zn(2+). D305 is a catalytic residue. Residues H309 and 322–323 each bind substrate; that span reads PG.

Belongs to the metallo-dependent hydrolases superfamily. DHOase family. Class I DHOase subfamily. In terms of assembly, monomer. Forms a 1:1 stoichiometric complex with PyrB. The complex exists as an equilibrium mixture of heterohexamers, composed of 3 PyrC and 3 PyrB subunits, and dodecamers. The complex has both DHOase and ATCase activities. It depends on Zn(2+) as a cofactor.

The catalysed reaction is (S)-dihydroorotate + H2O = N-carbamoyl-L-aspartate + H(+). The protein operates within pyrimidine metabolism; UMP biosynthesis via de novo pathway; (S)-dihydroorotate from bicarbonate: step 3/3. Its activity is regulated as follows. The monomer has very low activity by itself. Activated several thousandfold by formation of a complex with PyrB aspartate carbamoyltransferase (ATCase). Functionally, catalyzes the reversible cyclization of carbamoyl aspartate to dihydroorotate. This is Dihydroorotase from Aquifex aeolicus (strain VF5).